An 88-amino-acid polypeptide reads, in one-letter code: Small ribosomal subunit protein bS20 (88 aa).

Belongs to the bacterial ribosomal protein bS20 family.

Binds directly to 16S ribosomal RNA. In Bartonella tribocorum (strain CIP 105476 / IBS 506), this protein is Small ribosomal subunit protein bS20.